Here is an 88-residue protein sequence, read N- to C-terminus: HssA/B-like protein 64 (88 aa).

The segment covering 1-24 (MTLFSSISSMSSSMTSSKSSFASF) has biased composition (low complexity). Disordered stretches follow at residues 1-25 (MTLF…ASFG) and 45-88 (GVSS…GNSC). Residues 56–66 (AKSGGDCGGKG) are compositionally biased toward gly residues.

The protein belongs to the hssA/B family.

This is HssA/B-like protein 64 (hssl64) from Dictyostelium discoideum (Social amoeba).